The sequence spans 215 residues: Large ribosomal subunit protein bL25 (215 aa).

The disordered stretch occupies residues 160–215; it reads GDLPLPEGSELVTEPEETVMSVVAPETEEEPDTEEDEEGEEDVEEESEEEEEESEE. Over residues 185–215 the composition is skewed to acidic residues; that stretch reads ETEEEPDTEEDEEGEEDVEEESEEEEEESEE.

Belongs to the bacterial ribosomal protein bL25 family. CTC subfamily. Part of the 50S ribosomal subunit; part of the 5S rRNA/L5/L18/L25 subcomplex. Contacts the 5S rRNA. Binds to the 5S rRNA independently of L5 and L18.

Functionally, this is one of the proteins that binds to the 5S RNA in the ribosome where it forms part of the central protuberance. This Natranaerobius thermophilus (strain ATCC BAA-1301 / DSM 18059 / JW/NM-WN-LF) protein is Large ribosomal subunit protein bL25.